The primary structure comprises 1097 residues: DNA-directed RNA polymerase subunit beta (1097 aa).

Positions 1071-1097 are disordered; that stretch reads MQDVNPKRNTPSRPTYESLGTSEYAED. Over residues 1077–1091 the composition is skewed to polar residues; the sequence is KRNTPSRPTYESLGT.

Belongs to the RNA polymerase beta chain family. As to quaternary structure, in cyanobacteria the RNAP catalytic core is composed of 2 alpha, 1 beta, 1 beta', 1 gamma and 1 omega subunit. When a sigma factor is associated with the core the holoenzyme is formed, which can initiate transcription.

The enzyme catalyses RNA(n) + a ribonucleoside 5'-triphosphate = RNA(n+1) + diphosphate. DNA-dependent RNA polymerase catalyzes the transcription of DNA into RNA using the four ribonucleoside triphosphates as substrates. The chain is DNA-directed RNA polymerase subunit beta from Prochlorococcus marinus subsp. pastoris (strain CCMP1986 / NIES-2087 / MED4).